A 227-amino-acid polypeptide reads, in one-letter code: Chaperone protein FocC (227 aa).

An N-terminal signal peptide occupies residues 1-21 (MRIWAVLASFLVFFYIPQSYA).

Belongs to the periplasmic pilus chaperone family.

The protein localises to the periplasm. In terms of biological role, involved in the biogenesis of the F1C fimbriae. In Escherichia coli O6:H1 (strain CFT073 / ATCC 700928 / UPEC), this protein is Chaperone protein FocC (focC).